We begin with the raw amino-acid sequence, 162 residues long: Large ribosomal subunit protein bL17 (162 aa).

The segment at 126–162 (ATAKKATRTRRSKKSAAATEAPAAPAAETTEEAPKAE) is disordered. The segment covering 130–139 (KATRTRRSKK) has biased composition (basic residues). Low complexity predominate over residues 140-153 (SAAATEAPAAPAAE).

Belongs to the bacterial ribosomal protein bL17 family. Part of the 50S ribosomal subunit. Contacts protein L32.

In Phocaeicola vulgatus (strain ATCC 8482 / DSM 1447 / JCM 5826 / CCUG 4940 / NBRC 14291 / NCTC 11154) (Bacteroides vulgatus), this protein is Large ribosomal subunit protein bL17.